The following is a 404-amino-acid chain: Pectate lyase E (404 aa).

A signal peptide spans 1–41 (MNNSRMSSVSTQKTTGRSALGTKSALAAIIATTMMVSVASA). Positions 182 and 225 each coordinate Ca(2+). Residue arginine 278 is part of the active site.

The protein belongs to the polysaccharide lyase 1 family. PLBC subfamily. The cofactor is Ca(2+).

The protein resides in the secreted. It catalyses the reaction Eliminative cleavage of (1-&gt;4)-alpha-D-galacturonan to give oligosaccharides with 4-deoxy-alpha-D-galact-4-enuronosyl groups at their non-reducing ends.. It functions in the pathway glycan metabolism; pectin degradation; 2-dehydro-3-deoxy-D-gluconate from pectin: step 2/5. Functionally, involved in maceration and soft-rotting of plant tissue. Pectate lyases have been implicated as pathogenicity factors which induce maceration or rotting of plant tissue. PelE is sufficient to induce these effects under laboratory conditions. The polypeptide is Pectate lyase E (pelE) (Dickeya dadantii (strain 3937) (Erwinia chrysanthemi (strain 3937))).